The primary structure comprises 347 residues: Extracellular metalloprotease (347 aa).

An N-terminal signal peptide occupies residues 1–20 (MKSRPICSVIPPYILHRIIA). Residues 43-68 (SHHPRPEPHEKLPAGQANRSIHDAEQ) form a disordered region. A Zn(2+)-binding site is contributed by histidine 162. The active site involves glutamate 163. Positions 166 and 186 each coordinate Zn(2+). Histidine 264 (proton donor) is an active-site residue.

It belongs to the peptidase M4 family. The cofactor is Ca(2+). Zn(2+) is required as a cofactor.

It is found in the secreted. This Pectobacterium carotovorum subsp. carotovorum (Erwinia carotovora subsp. carotovora) protein is Extracellular metalloprotease (prt1).